The primary structure comprises 571 residues: Chondroitin sulfate proteoglycan 5 (571 aa).

Positions 1–30 are cleaved as a signal peptide; sequence MGRAGGGGPGWGPPPVLLLLGVTLVLTAGA. Residues 31 to 428 lie on the Extracellular side of the membrane; the sequence is VPAREAGSAI…SIITDFQVMC (398 aa). Ser-38 carries O-linked (Xyl...) (chondroitin sulfate) serine glycosylation. Asn-57 carries N-linked (GlcNAc...) asparagine glycosylation. The tract at residues 57 to 91 is disordered; it reads NDTREEAGLPAAGEDETSWTERGSELAAVGPGVGP. O-linked (GalNAc...) threonine glycosylation occurs at Thr-76. A glycan (O-linked (Xyl...) (chondroitin sulfate) serine) is linked at Ser-123. Thr-132 carries O-linked (GalNAc...) threonine glycosylation. Disordered stretches follow at residues 137–169, 186–254, and 279–357; these read DEAL…KPSL, GGST…TPSW, and DDLE…DLAT. A glycan (O-linked (GalNAc...) serine) is linked at Ser-143. O-linked (GalNAc...) threonine glycosylation is found at Thr-144 and Thr-153. O-linked (GalNAc...) serine glycosylation is found at Ser-156 and Ser-160. Residues Thr-162 and Thr-198 are each glycosylated (O-linked (GalNAc...) threonine). Positions 214 to 223 are enriched in acidic residues; that stretch reads IDIDYFEGLD. Thr-240 carries O-linked (GalNAc...) threonine glycosylation. Residues 270–306 are interaction with TNC and TNR; it reads DFYPTTSFYDDLEEEEEEEEDKDAVGGGDLEDESDLL. The segment covering 279 to 291 has biased composition (acidic residues); that stretch reads DDLEEEEEEEEDK. O-linked (GalNAc...) threonine glycans are attached at residues Thr-318 and Thr-322. Asn-372 carries N-linked (GlcNAc...) asparagine glycosylation. One can recognise an EGF-like domain in the interval 376 to 418; that stretch reads RSVCDLFPSYCHNGGQCYLVENIGAFCRCNTQDYIWHKGMRCE. Intrachain disulfides connect Cys-379–Cys-392, Cys-386–Cys-402, and Cys-404–Cys-417. A helical transmembrane segment spans residues 429–449; sequence VAVGSAALVLLLLFMMTVFFA. The tract at residues 447 to 465 is interaction with GOPC; it reads FFAKKLYLLKTENTKLRRT. Over 450 to 571 the chain is Cytoplasmic; it reads KKLYLLKTEN…EVNCLQNNLT (122 aa). Phosphoserine occurs at positions 472, 480, 488, and 548. Positions 538–563 are disordered; the sequence is EESFNIQNSMSPKLEGGKGDQDDLEV.

In terms of assembly, interacts with ERBB3 and GOPC. Binds TNR and probably TNC. Interacts with MDK; this interaction is independent of the presence of chondroitin sulfate chains and promotes elongation of oligodendroglial precursor-like cells. Post-translationally, N-glycosylated. O-glycosylated; contains chondroitin sulfate glycans. Part-time proteoglycan, expressed in part as a proteoglycan exhibiting chondroitin sulfate glycans and in part as a non-proteoglycan form. The relative amount of both forms depends on tissues and tissue maturation. In terms of processing, phosphorylated; in intracellular and extracellular parts. Expressed in cerebral cortex and cerebellum. Expressed in retina (at protein level).

Its subcellular location is the cell membrane. It localises to the synaptic cell membrane. The protein resides in the endoplasmic reticulum membrane. The protein localises to the golgi apparatus membrane. It is found in the cell surface. Its subcellular location is the secreted. Functionally, may function as a growth and differentiation factor involved in neuritogenesis. May induce ERBB3 activation. The sequence is that of Chondroitin sulfate proteoglycan 5 (Cspg5) from Rattus norvegicus (Rat).